The following is a 325-amino-acid chain: L-lactate dehydrogenase 1 (325 aa).

Residues Val-17, Asp-38, Lys-43, Tyr-68, and 82-83 (GA) contribute to the NAD(+) site. Substrate contacts are provided by residues Gln-85, Arg-91, and 123–126 (NPVD). NAD(+) is bound by residues 121-123 (AAN) and Ser-146. Residue 151 to 154 (DTAR) coordinates substrate. 2 residues coordinate beta-D-fructose 1,6-bisphosphate: Arg-156 and His-171. The Proton acceptor role is filled by His-178. At Tyr-223 the chain carries Phosphotyrosine. Residue Thr-232 participates in substrate binding.

Belongs to the LDH/MDH superfamily. LDH family. Homotetramer.

The protein resides in the cytoplasm. It carries out the reaction (S)-lactate + NAD(+) = pyruvate + NADH + H(+). The protein operates within fermentation; pyruvate fermentation to lactate; (S)-lactate from pyruvate: step 1/1. With respect to regulation, allosterically activated by fructose 1,6-bisphosphate (FBP). In terms of biological role, catalyzes the conversion of lactate to pyruvate. This Lactococcus lactis subsp. cremoris (Streptococcus cremoris) protein is L-lactate dehydrogenase 1.